Consider the following 218-residue polypeptide: Ornithine decarboxylase antizyme 2 (218 aa).

The protein belongs to the ODC antizyme family. In terms of assembly, interacts with ODC1 and thereby sterically blocks ODC homodimerization. In terms of tissue distribution, expressed ubiquitously in 24 hours embryos, with highest levels in telencephalon, lens, retina, cerebellum and hindbrain primordia.

In terms of biological role, ornithine decarboxylase (ODC) antizyme protein that negatively regulates ODC activity and intracellular polyamine biosynthesis and uptake in response to increased intracellular polyamine levels. Binds to ODC monomers, inhibiting the assembly of the functional ODC homodimers. Does not target the ODC monomers for degradation, which allows a protein synthesis-independent restoration of ODC activity. The polypeptide is Ornithine decarboxylase antizyme 2 (oaz1b) (Danio rerio (Zebrafish)).